We begin with the raw amino-acid sequence, 603 residues long: Dual specificity protein phosphatase CDC14A (603 aa).

The tract at residues 7–162 (ELIGACEFMK…GLQHGFFDFE (156 aa)) is a. Residues 163-176 (TFDAEEYEHYERVE) are linker. Residues 177–343 (NGDFNWIVPG…QGDIFRSKLK (167 aa)) form a b region. The Tyrosine-protein phosphatase domain maps to 179–336 (DFNWIVPGKF…KQASLWVQGD (158 aa)). Cys-278 serves as the catalytic Phosphocysteine intermediate. Ser-484 is modified (phosphoserine). Over residues 518-538 (NGSTQTPGRNYPELNNNQYTR) the composition is skewed to polar residues. The tract at residues 518–583 (NGSTQTPGRN…RPSFPGSLSS (66 aa)) is disordered. 2 stretches are compositionally biased toward low complexity: residues 539-558 (SSNS…LNSS) and 573-583 (LRPSFPGSLSS). Ser-592 is subject to Phosphoserine.

It belongs to the protein-tyrosine phosphatase family. Non-receptor class CDC14 subfamily. In terms of assembly, interacts with KIF20A. Interaction is required to localize CDC14 to the midzone of the mitotic spindle. Expressed in the inner ear.

The protein localises to the nucleus. The protein resides in the cytoplasm. It is found in the cytoskeleton. It localises to the microtubule organizing center. Its subcellular location is the centrosome. The protein localises to the spindle. The protein resides in the cell projection. It is found in the kinocilium. It localises to the spindle pole. Its subcellular location is the stereocilium. It catalyses the reaction O-phospho-L-tyrosyl-[protein] + H2O = L-tyrosyl-[protein] + phosphate. The catalysed reaction is O-phospho-L-seryl-[protein] + H2O = L-seryl-[protein] + phosphate. It carries out the reaction O-phospho-L-threonyl-[protein] + H2O = L-threonyl-[protein] + phosphate. Functionally, dual-specificity phosphatase. Required for centrosome separation and productive cytokinesis during cell division. Dephosphorylates SIRT2 around early anaphase. May dephosphorylate the APC subunit FZR1/CDH1, thereby promoting APC-FZR1 dependent degradation of mitotic cyclins and subsequent exit from mitosis. Required for normal hearing. This Mus musculus (Mouse) protein is Dual specificity protein phosphatase CDC14A (Cdc14a).